The following is a 141-amino-acid chain: Large ribosomal subunit protein uL11 (141 aa).

The protein belongs to the universal ribosomal protein uL11 family. As to quaternary structure, part of the ribosomal stalk of the 50S ribosomal subunit. Interacts with L10 and the large rRNA to form the base of the stalk. L10 forms an elongated spine to which L12 dimers bind in a sequential fashion forming a multimeric L10(L12)X complex. In terms of processing, one or more lysine residues are methylated.

Forms part of the ribosomal stalk which helps the ribosome interact with GTP-bound translation factors. In Nautilia profundicola (strain ATCC BAA-1463 / DSM 18972 / AmH), this protein is Large ribosomal subunit protein uL11.